Here is a 290-residue protein sequence, read N- to C-terminus: Glycine--tRNA ligase alpha subunit (290 aa).

It belongs to the class-II aminoacyl-tRNA synthetase family. Tetramer of two alpha and two beta subunits.

The protein localises to the cytoplasm. The catalysed reaction is tRNA(Gly) + glycine + ATP = glycyl-tRNA(Gly) + AMP + diphosphate. The sequence is that of Glycine--tRNA ligase alpha subunit from Desulfotalea psychrophila (strain LSv54 / DSM 12343).